A 353-amino-acid chain; its full sequence is T-complex protein 1 subunit eta (353 aa).

It belongs to the TCP-1 chaperonin family. In terms of assembly, heterooligomeric complex of about 850 to 900 kDa that forms two stacked rings, 12 to 16 nm in diameter.

Its subcellular location is the cytoplasm. Its function is as follows. Molecular chaperone; assists the folding of proteins upon ATP hydrolysis. Known to play a role, in vitro, in the folding of actin and tubulin. The sequence is that of T-complex protein 1 subunit eta from Tetrahymena thermophila.